A 368-amino-acid polypeptide reads, in one-letter code: uncharacterized protein (368 aa).

This sequence belongs to the ornithine cyclodeaminase/mu-crystallin family.

This is an uncharacterized protein from Dictyostelium discoideum (Social amoeba).